The following is a 232-amino-acid chain: E3 ubiquitin-protein ligase RNF125 (232 aa).

Polar residues predominate over residues 1 to 10; sequence MGSVLSSDSG. A disordered region spans residues 1–27; it reads MGSVLSSDSGKSAPPSATPRALERRGD. Gly-2 carries the N-myristoyl glycine lipid modification. Positions 37 and 40 each coordinate Zn(2+). The segment at 37–76 adopts an RING-type zinc-finger fold; sequence CAVCLEVLHQPVRTRCGHVFCRSCIATSLKNNKWTCPYCR. The interaction with the C2HC RNF-type zinc finger stretch occupies residues 43 to 45; that stretch reads VLH. The Zn(2+) site is built by Cys-52, His-54, Cys-57, Cys-60, Cys-72, Cys-75, Cys-100, and Cys-103. The C2HC RNF-type zinc-finger motif lies at 100 to 119; that stretch reads CAECDTLVCLGEMRAHIRTC. Residues 109 to 113 form an interaction with the RING-type zinc finger region; sequence LGEMR. 2 residues coordinate Zn(2+): His-115 and Cys-119. Residues 120–128 are linker region; it reads QKYIDKYGP. The required for interaction with ubiquitin and for autoubiquitination stretch occupies residues 210 to 224; sequence EEALIRRVLDRSLLE.

In terms of assembly, interacts with UBE2D1. Interacts with VCP/p97; leading to recruit RNF125 to RIGI and promote ubiquitination of RIGI. Autoubiquitinated, leading to its subsequent proteasomal degradation.

Its subcellular location is the golgi apparatus membrane. The enzyme catalyses S-ubiquitinyl-[E2 ubiquitin-conjugating enzyme]-L-cysteine + [acceptor protein]-L-lysine = [E2 ubiquitin-conjugating enzyme]-L-cysteine + N(6)-ubiquitinyl-[acceptor protein]-L-lysine.. Its pathway is protein modification; protein ubiquitination. E3 ubiquitin-protein ligase that mediates ubiquitination and subsequent proteasomal degradation of target proteins, such as RIGI, MAVS/IPS1, IFIH1/MDA5, JAK1 and p53/TP53. Acts as a negative regulator of type I interferon production by mediating ubiquitination of RIGI at 'Lys-181', leading to RIGI degradation. Mediates ubiquitination and subsequent degradation of p53/TP53. Mediates ubiquitination and subsequent degradation of JAK1. Acts as a positive regulator of T-cell activation. The chain is E3 ubiquitin-protein ligase RNF125 (RNF125) from Macaca fascicularis (Crab-eating macaque).